A 150-amino-acid chain; its full sequence is UPF0756 membrane protein PC1_1142 (150 aa).

4 consecutive transmembrane segments (helical) span residues 1 to 21, 51 to 71, 82 to 102, and 127 to 147; these read MAYL…GIIS, YGLS…IASG, FLHW…WLGG, and ALFR…SLLI.

Belongs to the UPF0756 family.

The protein resides in the cell membrane. The sequence is that of UPF0756 membrane protein PC1_1142 from Pectobacterium carotovorum subsp. carotovorum (strain PC1).